The primary structure comprises 154 residues: Myoglobin (154 aa).

The 147-residue stretch at 2-148 (GLSDGEWQLV…FRNDMAAKYK (147 aa)) folds into the Globin domain. The residue at position 4 (Ser-4) is a Phosphoserine. His-65 is a nitrite binding site. Residue His-65 coordinates O2. A Phosphothreonine modification is found at Thr-68. His-94 provides a ligand contact to heme b.

This sequence belongs to the globin family. As to quaternary structure, monomeric.

The protein localises to the cytoplasm. Its subcellular location is the sarcoplasm. It catalyses the reaction Fe(III)-heme b-[protein] + nitric oxide + H2O = Fe(II)-heme b-[protein] + nitrite + 2 H(+). It carries out the reaction H2O2 + AH2 = A + 2 H2O. Monomeric heme protein which primary function is to store oxygen and facilitate its diffusion within muscle tissues. Reversibly binds oxygen through a pentacoordinated heme iron and enables its timely and efficient release as needed during periods of heightened demand. Depending on the oxidative conditions of tissues and cells, and in addition to its ability to bind oxygen, it also has a nitrite reductase activity whereby it regulates the production of bioactive nitric oxide. Under stress conditions, like hypoxia and anoxia, it also protects cells against reactive oxygen species thanks to its pseudoperoxidase activity. The sequence is that of Myoglobin (MB) from Aotus trivirgatus (Three-striped night monkey).